We begin with the raw amino-acid sequence, 125 residues long: Large ribosomal subunit protein bL12 (125 aa).

It belongs to the bacterial ribosomal protein bL12 family. As to quaternary structure, homodimer. Part of the ribosomal stalk of the 50S ribosomal subunit. Forms a multimeric L10(L12)X complex, where L10 forms an elongated spine to which 2 to 4 L12 dimers bind in a sequential fashion. Binds GTP-bound translation factors.

Its function is as follows. Forms part of the ribosomal stalk which helps the ribosome interact with GTP-bound translation factors. Is thus essential for accurate translation. This Liberibacter africanus (Citrus greening disease) protein is Large ribosomal subunit protein bL12.